Reading from the N-terminus, the 184-residue chain is ATP synthase subunit b, chloroplastic (184 aa).

The helical transmembrane segment at 27 to 49 threads the bilayer; sequence LATNPINLSVVLGVLIFFGKGVL.

The protein belongs to the ATPase B chain family. In terms of assembly, F-type ATPases have 2 components, F(1) - the catalytic core - and F(0) - the membrane proton channel. F(1) has five subunits: alpha(3), beta(3), gamma(1), delta(1), epsilon(1). F(0) has four main subunits: a(1), b(1), b'(1) and c(10-14). The alpha and beta chains form an alternating ring which encloses part of the gamma chain. F(1) is attached to F(0) by a central stalk formed by the gamma and epsilon chains, while a peripheral stalk is formed by the delta, b and b' chains.

Its subcellular location is the plastid. It localises to the chloroplast thylakoid membrane. F(1)F(0) ATP synthase produces ATP from ADP in the presence of a proton or sodium gradient. F-type ATPases consist of two structural domains, F(1) containing the extramembraneous catalytic core and F(0) containing the membrane proton channel, linked together by a central stalk and a peripheral stalk. During catalysis, ATP synthesis in the catalytic domain of F(1) is coupled via a rotary mechanism of the central stalk subunits to proton translocation. Functionally, component of the F(0) channel, it forms part of the peripheral stalk, linking F(1) to F(0). The protein is ATP synthase subunit b, chloroplastic of Piper cenocladum (Ant piper).